Here is a 689-residue protein sequence, read N- to C-terminus: DNA ligase (689 aa).

NAD(+)-binding positions include 40–44 (DAEYD), 89–90 (SL), and glutamate 121. Residue lysine 123 is the N6-AMP-lysine intermediate of the active site. NAD(+) contacts are provided by arginine 144, glutamate 179, lysine 295, and lysine 319. 4 residues coordinate Zn(2+): cysteine 413, cysteine 416, cysteine 431, and cysteine 437. Residues 610-689 (REQSSLTGKI…AEWLTLVRDI (80 aa)) form the BRCT domain.

The protein belongs to the NAD-dependent DNA ligase family. LigA subfamily. The cofactor is Mg(2+). Mn(2+) is required as a cofactor.

It carries out the reaction NAD(+) + (deoxyribonucleotide)n-3'-hydroxyl + 5'-phospho-(deoxyribonucleotide)m = (deoxyribonucleotide)n+m + AMP + beta-nicotinamide D-nucleotide.. Functionally, DNA ligase that catalyzes the formation of phosphodiester linkages between 5'-phosphoryl and 3'-hydroxyl groups in double-stranded DNA using NAD as a coenzyme and as the energy source for the reaction. It is essential for DNA replication and repair of damaged DNA. The polypeptide is DNA ligase (Rickettsia bellii (strain OSU 85-389)).